The primary structure comprises 355 residues: Uroporphyrinogen decarboxylase (355 aa).

Substrate-binding positions include 27–31 (RQAGR), Asp77, Tyr154, Thr209, and His327.

The protein belongs to the uroporphyrinogen decarboxylase family. In terms of assembly, homodimer.

The protein localises to the cytoplasm. It carries out the reaction uroporphyrinogen III + 4 H(+) = coproporphyrinogen III + 4 CO2. The protein operates within porphyrin-containing compound metabolism; protoporphyrin-IX biosynthesis; coproporphyrinogen-III from 5-aminolevulinate: step 4/4. Its function is as follows. Catalyzes the decarboxylation of four acetate groups of uroporphyrinogen-III to yield coproporphyrinogen-III. This Erwinia tasmaniensis (strain DSM 17950 / CFBP 7177 / CIP 109463 / NCPPB 4357 / Et1/99) protein is Uroporphyrinogen decarboxylase.